The sequence spans 288 residues: HTH-type transcriptional regulator CzcR (288 aa).

The HTH lysR-type domain maps to 1-58 (MELRDLQIFQSVADQGSVSSAAKELNYVQSNVTARIKQLENELKTPLFYRHKRGMTLT). Residues 18–37 (VSSAAKELNYVQSNVTARIK) constitute a DNA-binding region (H-T-H motif).

Belongs to the LysR transcriptional regulatory family.

The chain is HTH-type transcriptional regulator CzcR (czcR) from Bacillus anthracis.